Consider the following 363-residue polypeptide: MTSLINVNLPEQSYEIAIAPSNLDQLGQQMANLKLGKKVLLVSNPTIFKHYGERAITSLKSAGFEVASCTLPPGERYKNLNSIQKLYDVALENRLERSATMVALGGGVIGDMTGFAAATWLRGINVVQVPTTLLAMVDSAIGGKTGVNHPHGKNLIGAFHQPRLVLIDPDVLKTLPMREFRAGMAEVIKYGVIWDAELFAQLEASKRLDQLRYVKPELIDSILTRSCQAKADVVGKDEKEGGLRAILNYGHTIGHAVESLTGYRLVNHGEAVAIGMVAAGQIAVELGMWQKEDTERQNALIQKTGLPTQLPSGVDIEAIIDALQLDKKVKAGKVRFVLPTEIGVVTVTDEVPSDIIRQVLQGM.

Residues 107–111 (GVIGD), 131–132 (TT), K144, and K153 each bind NAD(+). Residues E186, H251, and H268 each contribute to the Zn(2+) site.

This sequence belongs to the sugar phosphate cyclases superfamily. Dehydroquinate synthase family. It depends on Co(2+) as a cofactor. Zn(2+) serves as cofactor. Requires NAD(+) as cofactor.

The protein localises to the cytoplasm. The enzyme catalyses 7-phospho-2-dehydro-3-deoxy-D-arabino-heptonate = 3-dehydroquinate + phosphate. Its pathway is metabolic intermediate biosynthesis; chorismate biosynthesis; chorismate from D-erythrose 4-phosphate and phosphoenolpyruvate: step 2/7. Catalyzes the conversion of 3-deoxy-D-arabino-heptulosonate 7-phosphate (DAHP) to dehydroquinate (DHQ). The chain is 3-dehydroquinate synthase from Nostoc punctiforme (strain ATCC 29133 / PCC 73102).